We begin with the raw amino-acid sequence, 269 residues long: Zinc transporter ZupT (269 aa).

The next 8 membrane-spanning stretches (helical) occupy residues 11 to 31, 40 to 60, 80 to 100, 125 to 145, 158 to 178, 187 to 207, 217 to 237, and 249 to 269; these read IALAVTLAAGLATAIGSLLVL, LLAFGLAFAGGAMVYVSLSEI, YGTLAFLAGVIVIVLIDHFIP, ALLTSVAITAHNFPEGLATFF, AFAIAIHNIPEGIAIAVPVYF, FSASLLSGLAEPVGAALGYWL, FGWVFGLIAGVMVFLALDELL, and TVYGLVAGMGTLAISLVLFKW. The Fe(2+) site is built by Asn-136 and Glu-139. The Zn(2+) site is built by Glu-139 and His-164. Positions 165, 168, and 197 each coordinate Fe(2+). A Zn(2+)-binding site is contributed by Glu-168.

Belongs to the ZIP transporter (TC 2.A.5) family. ZupT subfamily.

The protein resides in the cell inner membrane. The catalysed reaction is Zn(2+)(in) = Zn(2+)(out). Its function is as follows. Mediates zinc uptake. May also transport other divalent cations. The sequence is that of Zinc transporter ZupT from Stenotrophomonas maltophilia (strain K279a).